The chain runs to 476 residues: MNFETVIGLEVHVELKTNSKIFSSAPAHFGAEPNSNTNVVDWSYPGVLPVMNKGALEFGMKAALALNCEISKETHFDRKNYFYPDNPKAYQISQFDQPIGHDGWIEIEVEGKKKKIRIERVHLEEDAGKNIHGTDGYSYVDLNRQGTPLIEIVSEADMRSPEEAYAYLEALRSIIQFTEVSDVKMEEGSMRCDANISLRPYGQEEFGTKAELKNLNSMNFVKKGLAYEEKRQAKVLLSGGEIQQETRRFDEATSTTLLMRVKEGSSDYRYFPEPDVPRFSIDDEWIEKVRASLPEMPASRRARYISELGLPEYDAMVLTLTKEMSDFFEATLANGADAKQASNWLMGEVSAYLNSEKVELADTKLTPENLAGMITLINDGTISSKIAKKVFKELIENGGDAKEVVEAKGLVQLSDPAQLLPMINEVLDNNQQSIDDFKNGKDRAVGFLVGQIMKATRGQANPGVVNKLLQEELSKR.

This sequence belongs to the GatB/GatE family. GatB subfamily. Heterotrimer of A, B and C subunits.

The catalysed reaction is L-glutamyl-tRNA(Gln) + L-glutamine + ATP + H2O = L-glutaminyl-tRNA(Gln) + L-glutamate + ADP + phosphate + H(+). It carries out the reaction L-aspartyl-tRNA(Asn) + L-glutamine + ATP + H2O = L-asparaginyl-tRNA(Asn) + L-glutamate + ADP + phosphate + 2 H(+). Allows the formation of correctly charged Asn-tRNA(Asn) or Gln-tRNA(Gln) through the transamidation of misacylated Asp-tRNA(Asn) or Glu-tRNA(Gln) in organisms which lack either or both of asparaginyl-tRNA or glutaminyl-tRNA synthetases. The reaction takes place in the presence of glutamine and ATP through an activated phospho-Asp-tRNA(Asn) or phospho-Glu-tRNA(Gln). This chain is Aspartyl/glutamyl-tRNA(Asn/Gln) amidotransferase subunit B, found in Enterococcus faecalis (strain ATCC 700802 / V583).